A 585-amino-acid chain; its full sequence is ATP-dependent RNA helicase DBP3 (585 aa).

A disordered region spans residues 1 to 124 (MTTSATEKAL…SSSASAASFT (124 aa)). Low complexity predominate over residues 26–43 (AKAAAAAGASASTSLEGS). Basic residues-rich tracts occupy residues 52–64 (KDKKDKKDKKDKK) and 79–93 (AKKRRKEEKKAKKAA). The segment covering 94-124 (AKSGAATSLESTPAASPAPAASSSASAASFT) has biased composition (low complexity). A Q motif motif is present at residues 159 to 187 (FRELDGKVDAAVKKTLDSQGFSTPTPIQA). Residues 190–377 (WPVLLQNKDV…ESFMNGPVRV (188 aa)) enclose the Helicase ATP-binding domain. 203-210 (AETGSGKT) is a binding site for ATP. Residues 322–325 (DEAD) carry the DEAD box motif. A Helicase C-terminal domain is found at 406–554 (RLNDFLRSVN…KVPDALTKFP (149 aa)).

It belongs to the DEAD box helicase family. DDX5/DBP2 subfamily.

The protein localises to the nucleus. It is found in the nucleolus. The catalysed reaction is ATP + H2O = ADP + phosphate + H(+). Functionally, ATP-dependent RNA helicase required for 60S ribosomal subunit synthesis. Involved in efficient pre-rRNA processing, predominantly at site A3, which is necessary for the normal formation of 25S and 5.8S rRNAs. This is ATP-dependent RNA helicase DBP3 (DBP3) from Mycosarcoma maydis (Corn smut fungus).